The chain runs to 174 residues: Elongation factor Tu, mitochondrial (174 aa).

Residue 62–66 (DCPGH) coordinates GTP. Position 78 is an N6-succinyllysine (K78). T103 is modified (phosphothreonine). Phosphoserine is present on S121. N6-acetyllysine is present on K161.

This sequence belongs to the GTP-binding elongation factor family. EF-Tu/EF-1A subfamily.

The protein localises to the mitochondrion. It catalyses the reaction GTP + H2O = GDP + phosphate + H(+). In terms of biological role, GTP hydrolase that promotes the GTP-dependent binding of aminoacyl-tRNA to the A-site of ribosomes during protein biosynthesis. The chain is Elongation factor Tu, mitochondrial from Mesocricetus auratus (Golden hamster).